Reading from the N-terminus, the 285-residue chain is Large ribosomal subunit protein uL1m (285 aa).

Residues 1–19 constitute a mitochondrion transit peptide; it reads MLSVVAIPKICVTGPARRC.

The protein belongs to the universal ribosomal protein uL1 family. Component of the mitochondrial large ribosomal subunit (mt-LSU). Mature yeast 74S mitochondrial ribosomes consist of a small (37S) and a large (54S) subunit. The 37S small subunit contains a 15S ribosomal RNA (15S mt-rRNA) and 34 different proteins. The 54S large subunit contains a 21S rRNA (21S mt-rRNA) and 46 different proteins.

It is found in the mitochondrion. Functionally, component of the mitochondrial ribosome (mitoribosome), a dedicated translation machinery responsible for the synthesis of mitochondrial genome-encoded proteins, including at least some of the essential transmembrane subunits of the mitochondrial respiratory chain. The mitoribosomes are attached to the mitochondrial inner membrane and translation products are cotranslationally integrated into the membrane. The polypeptide is Large ribosomal subunit protein uL1m (MRPL1) (Saccharomyces cerevisiae (strain ATCC 204508 / S288c) (Baker's yeast)).